We begin with the raw amino-acid sequence, 1368 residues long: MAVAEAKPQYSHAEKKRFRKSFGKQTDIMPIPNLLEIQLKSYRDFLQTDTKLSEQLNTGLHAAFSSVFPIESFSGNARLEYVGYKLGEPAFDVRECKLRGLTYSAPLRVKIRLVVLDKDASDDPKPIKDIREQDVFMGEIPLMTDVGTFVVNGTERVVVSQLHRSPGVIFEHDKGKTHSSGKLLYSARIIPYRGSWLDFEFDPKDCVYVRIDRRRKLPVSILLRALGYEAEDILSEFFETTRCHLKNGEYHIDLIPQRLRGEIASFDIHVPETGELIVEQGRRITARHIKQMEKSQMQDLVVPRDYLIGKTLAKNIIDTSTGEFLAQANDEITEELLDAMANHGILQIDMIYTNDLDHGSYISDTLKIDPTGSQLEALVEIYRMMRPGEPPTKEAAEALFKNLFFVEERYDLSAVGRMKFNRRVGIKSDEGPGTLTKEDILSVIKTLIDIRNGIGMVDDIDHLGNRRVRSVGEMTENQFRVGLVRVERAVKERLSLVESENLMPQDLINAKPVSAAIKEFFGSSQLSQFMDQVNPLSGVTHKRRVSALGPGGLTRERAGFEVRDVHTTHYGRVCPIETPEGPNIGLINSLSVYARTNEYGFIETPCRKVVNGRVTDEVEYLSAIEEVDQYIAQSNVELDAQGNILADLVPCRHQNEFSLTTPDKINYMDVSPKQIVSVAASLIPFLEHDDANRALMGSNMQRQAVPTLRSEKPLVGTGMERIVASDSGVSVVAKRGGVIDLVDASRIVVRVNDDETTAGETGVDIYNLTKYFRSNQDTCINQRPIVSTGDRIQRGDVLADGPCTDMGELALGQNLLVAFMPWNGYNFEDSILISERIVHDDRFTTIHIEELTCIARDTKLGTEEITADIPNVGESALSNLDESGVVYIGAEVKAGDILVGKVTPKGETQLTPEEKLLRAIFGEKASDVKDSSLRVPSGMNGTVIDVQVFTRDGLEKDARAKSIEEEHLARVRKDLIDERRIREEDIYHRVSHLLLDKVATGGPGSLKPGSKITQDYLDKVEREKWFDIRIEDDAVSQQLEQLSKQLELLTKEMEKRFNDSRKKIIQGDDLAPGVLKIVKVYLAVKRRIQPGDKMAGRHGNKGVISIVVPVEDMPHMEDGTAVDIVLNPLGVPSRMNIGQVLETHLGLAAKGLGRKIAQMLDERQTPEAIKAYLEKIYNHDGVQRVNLKCLNDDELMTLADNLRAGVPMATPVFDGATEQEIKSMLQLADLPADGKTVLIDGRTGNKFDNTVTVGYMYMLKLNHLVDDKMHARSTGSYSLVTQQPLGGKAQFGGQRFGEMEVWALEAYGAAYTLQEMLTVKSDDVGGRTKIYKNIVDGDHRMDPGMPESFNVLLKEIRALGIDIELEHD.

Belongs to the RNA polymerase beta chain family. As to quaternary structure, the RNAP catalytic core consists of 2 alpha, 1 beta, 1 beta' and 1 omega subunit. When a sigma factor is associated with the core the holoenzyme is formed, which can initiate transcription.

It carries out the reaction RNA(n) + a ribonucleoside 5'-triphosphate = RNA(n+1) + diphosphate. Functionally, DNA-dependent RNA polymerase catalyzes the transcription of DNA into RNA using the four ribonucleoside triphosphates as substrates. In Legionella pneumophila (strain Paris), this protein is DNA-directed RNA polymerase subunit beta.